The sequence spans 253 residues: uncharacterized protein (253 aa).

Belongs to the MG439/MG440 family.

This is an uncharacterized protein from Mycoplasma pneumoniae (strain ATCC 29342 / M129 / Subtype 1) (Mycoplasmoides pneumoniae).